A 241-amino-acid chain; its full sequence is 1-(5-phosphoribosyl)-5-[(5-phosphoribosylamino)methylideneamino] imidazole-4-carboxamide isomerase (241 aa).

Aspartate 8 functions as the Proton acceptor in the catalytic mechanism. Aspartate 129 functions as the Proton donor in the catalytic mechanism.

It belongs to the HisA/HisF family.

Its subcellular location is the cytoplasm. It catalyses the reaction 1-(5-phospho-beta-D-ribosyl)-5-[(5-phospho-beta-D-ribosylamino)methylideneamino]imidazole-4-carboxamide = 5-[(5-phospho-1-deoxy-D-ribulos-1-ylimino)methylamino]-1-(5-phospho-beta-D-ribosyl)imidazole-4-carboxamide. It participates in amino-acid biosynthesis; L-histidine biosynthesis; L-histidine from 5-phospho-alpha-D-ribose 1-diphosphate: step 4/9. This chain is 1-(5-phosphoribosyl)-5-[(5-phosphoribosylamino)methylideneamino] imidazole-4-carboxamide isomerase, found in Chloroflexus aurantiacus (strain ATCC 29364 / DSM 637 / Y-400-fl).